A 379-amino-acid polypeptide reads, in one-letter code: Pathogen-associated molecular patterns-induced protein A70 (379 aa).

Residues valine 7–valine 29 traverse the membrane as a helical segment. Asparagine 122 carries N-linked (GlcNAc...) asparagine glycosylation. The segment at threonine 133 to alanine 154 is disordered. Over residues proline 137–proline 149 the composition is skewed to basic and acidic residues. An N-linked (GlcNAc...) asparagine glycan is attached at asparagine 170. 2 disordered regions span residues proline 216 to alanine 238 and serine 256 to aspartate 347. Over residues proline 221 to asparagine 231 the composition is skewed to polar residues. 2 stretches are compositionally biased toward basic and acidic residues: residues serine 256–lysine 285 and serine 322–arginine 335.

It is found in the membrane. The protein is Pathogen-associated molecular patterns-induced protein A70 of Arabidopsis thaliana (Mouse-ear cress).